The following is a 259-amino-acid chain: Proteasome subunit alpha (259 aa).

Belongs to the peptidase T1A family. As to quaternary structure, the 20S proteasome core is composed of 14 alpha and 14 beta subunits that assemble into four stacked heptameric rings, resulting in a barrel-shaped structure. The two inner rings, each composed of seven catalytic beta subunits, are sandwiched by two outer rings, each composed of seven alpha subunits. The catalytic chamber with the active sites is on the inside of the barrel. Has a gated structure, the ends of the cylinder being occluded by the N-termini of the alpha-subunits. Is capped at one or both ends by the proteasome regulatory ATPase, PAN.

It localises to the cytoplasm. Its activity is regulated as follows. The formation of the proteasomal ATPase PAN-20S proteasome complex, via the docking of the C-termini of PAN into the intersubunit pockets in the alpha-rings, triggers opening of the gate for substrate entry. Interconversion between the open-gate and close-gate conformations leads to a dynamic regulation of the 20S proteasome proteolysis activity. Component of the proteasome core, a large protease complex with broad specificity involved in protein degradation. This chain is Proteasome subunit alpha, found in Methanococcus maripaludis (strain C5 / ATCC BAA-1333).